A 91-amino-acid chain; its full sequence is uncharacterized protein (91 aa).

The N-terminal stretch at 1-25 (MLLQRIGIEHLRIWILLLLISLVPA) is a signal peptide.

This is an uncharacterized protein from Caenorhabditis elegans.